A 455-amino-acid polypeptide reads, in one-letter code: MGLVDGYDTSSDSDLNFDEGKSVHEKKNGNLHEDTSYEPSSNNIHKRKSHFTKSELKRRRKTRKGDGPWGSWSSSDDETSQASETQKEDQDIFVHALAEDNLDSEQIEVEEVSHFYGKSEKDYQGRGYLYPPNDVDVDLREERISFRCYLPKKVIRNYPGHPEGTTALKFLPKTGHLILSGGNDHTIKIWDFYHDYECLRDFQGHNKPIKALRFTEDCQSFLSSSFDRSVKIWDTETGKVKTRLHLNSTPADVESRPTNPHEFIVGLSNSKILHYDDRVSENQGLVQTYDHHLSSILALKYFPDGSKFISSSEDKTVRIWENQINVPIKQISDTAQHSMPFLNVHPSQNYFCAQSMDNRIYSFSLKPKYKRHPKKIFKGHSSAGYGISLAFSGDGRYICSGDSKSRLFTWDWNTSRLLNNIKIPGNKPITQVDWHPQETSKVICSGAAGKIYVCD.

The segment at 1–89 (MGLVDGYDTS…SQASETQKED (89 aa)) is disordered. Residues 18-35 (DEGKSVHEKKNGNLHEDT) show a composition bias toward basic and acidic residues. Residues 44 to 63 (IHKRKSHFTKSELKRRRKTR) show a composition bias toward basic residues. 6 WD repeats span residues 160–200 (GHPE…ECLR), 204–243 (GHNKPIKALRFTEDCQSFLSSSFDRSVKIWDTETGKVKTR), 291–330 (HHLSSILALKYFPDGSKFISSSEDKTVRIWENQINVPIKQ), 334–373 (TAQHSMPFLNVHPSQNYFCAQSMDNRIYSFSLKPKYKRHP), 379–422 (GHSS…NNIK), and 424–454 (PGNKPITQVDWHPQETSKVICSGAAGKIYVC).

Belongs to the CWC complex (or CEF1-associated complex), a spliceosome sub-complex reminiscent of a late-stage spliceosome composed of the U2, U5 and U6 snRNAs and at least BUD13, BUD31, BRR2, CDC40, CEF1, CLF1, CUS1, CWC2, CWC15, CWC21, CWC22, CWC23, CWC24, CWC25, CWC27, ECM2, HSH155, IST3, ISY1, LEA1, MSL1, NTC20, PRP8, PRP9, PRP11, PRP19, PRP21, PRP22, PRP45, PRP46, SLU7, SMB1, SMD1, SMD2, SMD3, SMX2, SMX3, SNT309, SNU114, SPP2, SYF1, SYF2, RSE1 and YJU2.

It is found in the nucleus. In terms of biological role, may function in the second step of pre-mRNA splicing. Regulatory protein involved in replication and mitotic spindle formation and/or maintenance. Required for initiation and completion of S-phase and for initiation and completion of DNA replication. Might be required for the maintenance of microtubules. Essential only at elevated temperatures. The sequence is that of Pre-mRNA-processing factor 17 (CDC40) from Saccharomyces cerevisiae (strain ATCC 204508 / S288c) (Baker's yeast).